We begin with the raw amino-acid sequence, 234 residues long: STARD3 N-terminal-like protein (234 aa).

Met1 is subject to N-acetylmethionine. Over 1–53 the chain is Cytoplasmic; the sequence is MNHLPEDMENALTGSQSSHASLRNIHSINPTQLMARIESYEGREKKGISDVRR. 3 positions are modified to phosphoserine: Ser15, Ser21, and Ser27. The region spanning 48–218 is the MENTAL domain; the sequence is ISDVRRTFCL…YSPPESEAGS (171 aa). The chain crosses the membrane as a helical span at residues 54–74; it reads TFCLFVTFDLLFVTLLWIIEL. Residues 75–97 lie on the Extracellular side of the membrane; the sequence is NVNGGIENTLEKEVMQYDYYSSY. The chain crosses the membrane as a helical span at residues 98–118; the sequence is FDIFLLAVFRFKVLILAYAVC. Residues 119–122 are Cytoplasmic-facing; that stretch reads RLRH. A helical membrane pass occupies residues 123–143; that stretch reads WWAIALTTAVTSAFLLAKVIL. Over 144–150 the chain is Extracellular; that stretch reads SKLFSQG. The chain crosses the membrane as a helical span at residues 151-171; it reads AFGYVLPIISFILAWIETWFL. Over 172 to 234 the chain is Cytoplasmic; the sequence is DFKVLPQEAE…QDSEKPLLEL (63 aa). Position 193 is a phosphoserine (Ser193). The tract at residues 200-234 is disordered; it reads PGGLSDGQFYSPPESEAGSEEAEEKQDSEKPLLEL. Positions 208-213 match the FFAT motif; sequence FYSPPE. The span at 224 to 234 shows a compositional bias: basic and acidic residues; sequence KQDSEKPLLEL.

The protein belongs to the STARD3 family. Homodimer. Interacts (via the MENTAL domain) with STARD3NL. Interacts (via FFAT motif) with VAPA. Interacts (via FFAT motif) with VAPB. Interacts (via FFAT motif) with MOSPD2 (via MSP domain).

It localises to the late endosome membrane. Its function is as follows. Tethering protein that creates contact site between the endoplasmic reticulum and late endosomes: localizes to late endosome membranes and contacts the endoplasmic reticulum via interaction with VAPA and VAPB. The polypeptide is STARD3 N-terminal-like protein (Homo sapiens (Human)).